A 131-amino-acid polypeptide reads, in one-letter code: uncharacterized protein (131 aa).

A compositionally biased stretch (low complexity) spans 31-40 (AAATSRAAPL). The tract at residues 31–131 (AAATSRAAPL…EAKTEQTKTP (101 aa)) is disordered.

This is an uncharacterized protein from Homo sapiens (Human).